We begin with the raw amino-acid sequence, 126 residues long: uncharacterized protein (126 aa).

The chain crosses the membrane as a helical span at residues 5–25; that stretch reads LIQHITSIFVFSFFFLFFFFS.

The protein localises to the membrane. This is an uncharacterized protein from Saccharomyces cerevisiae (strain ATCC 204508 / S288c) (Baker's yeast).